A 667-amino-acid polypeptide reads, in one-letter code: DNA ligase (667 aa).

NAD(+)-binding positions include 30–34, 79–80, and E112; these read DSEYD and SL. The N6-AMP-lysine intermediate role is filled by K114. 4 residues coordinate NAD(+): R135, E172, K289, and K313. Positions 407, 410, 425, and 431 each coordinate Zn(2+). The BRCT domain occupies 590–667; the sequence is VRDNPLKGKT…SENEFLALLA (78 aa).

It belongs to the NAD-dependent DNA ligase family. LigA subfamily. Mg(2+) serves as cofactor. It depends on Mn(2+) as a cofactor.

It carries out the reaction NAD(+) + (deoxyribonucleotide)n-3'-hydroxyl + 5'-phospho-(deoxyribonucleotide)m = (deoxyribonucleotide)n+m + AMP + beta-nicotinamide D-nucleotide.. In terms of biological role, DNA ligase that catalyzes the formation of phosphodiester linkages between 5'-phosphoryl and 3'-hydroxyl groups in double-stranded DNA using NAD as a coenzyme and as the energy source for the reaction. It is essential for DNA replication and repair of damaged DNA. The sequence is that of DNA ligase from Histophilus somni (strain 2336) (Haemophilus somnus).